We begin with the raw amino-acid sequence, 453 residues long: Bifunctional protein GlmU (453 aa).

The tract at residues 1–226 (MKFSTVILAA…SIEVEGVNDR (226 aa)) is pyrophosphorylase. Residues 8-11 (LAAG), Lys22, Gln73, 78-79 (GT), 100-102 (YGD), Gly137, Glu151, Asn166, and Asn224 each bind UDP-N-acetyl-alpha-D-glucosamine. Asp102 is a binding site for Mg(2+). Residue Asn224 coordinates Mg(2+). Residues 227 to 247 (IQLARLERAFQARQAKKLLEQ) form a linker region. Residues 248-453 (GVMLRDPARF…AGWQRPAKKK (206 aa)) are N-acetyltransferase. 2 residues coordinate UDP-N-acetyl-alpha-D-glucosamine: Arg330 and Lys348. Residue His360 is the Proton acceptor of the active site. Residues Tyr363 and Asn374 each coordinate UDP-N-acetyl-alpha-D-glucosamine. Acetyl-CoA is bound by residues Ala377, 383 to 384 (NY), Ser402, Ala420, and Arg437.

This sequence in the N-terminal section; belongs to the N-acetylglucosamine-1-phosphate uridyltransferase family. The protein in the C-terminal section; belongs to the transferase hexapeptide repeat family. In terms of assembly, homotrimer. It depends on Mg(2+) as a cofactor.

The protein resides in the cytoplasm. It carries out the reaction alpha-D-glucosamine 1-phosphate + acetyl-CoA = N-acetyl-alpha-D-glucosamine 1-phosphate + CoA + H(+). The catalysed reaction is N-acetyl-alpha-D-glucosamine 1-phosphate + UTP + H(+) = UDP-N-acetyl-alpha-D-glucosamine + diphosphate. The protein operates within nucleotide-sugar biosynthesis; UDP-N-acetyl-alpha-D-glucosamine biosynthesis; N-acetyl-alpha-D-glucosamine 1-phosphate from alpha-D-glucosamine 6-phosphate (route II): step 2/2. It functions in the pathway nucleotide-sugar biosynthesis; UDP-N-acetyl-alpha-D-glucosamine biosynthesis; UDP-N-acetyl-alpha-D-glucosamine from N-acetyl-alpha-D-glucosamine 1-phosphate: step 1/1. Its pathway is bacterial outer membrane biogenesis; LPS lipid A biosynthesis. Its function is as follows. Catalyzes the last two sequential reactions in the de novo biosynthetic pathway for UDP-N-acetylglucosamine (UDP-GlcNAc). The C-terminal domain catalyzes the transfer of acetyl group from acetyl coenzyme A to glucosamine-1-phosphate (GlcN-1-P) to produce N-acetylglucosamine-1-phosphate (GlcNAc-1-P), which is converted into UDP-GlcNAc by the transfer of uridine 5-monophosphate (from uridine 5-triphosphate), a reaction catalyzed by the N-terminal domain. The protein is Bifunctional protein GlmU of Vibrio cholerae serotype O1 (strain M66-2).